The sequence spans 364 residues: Dihydroorotase (364 aa).

Histidine 14, histidine 16, lysine 98, histidine 137, histidine 180, and aspartate 258 together coordinate Zn(2+). Position 98 is an N6-carboxylysine (lysine 98).

It belongs to the metallo-dependent hydrolases superfamily. DHOase family. Class II DHOase subfamily. The cofactor is Zn(2+).

The catalysed reaction is (S)-dihydroorotate + H2O = N-carbamoyl-L-aspartate + H(+). Its pathway is pyrimidine metabolism; UMP biosynthesis via de novo pathway; (S)-dihydroorotate from bicarbonate: step 3/3. Catalyzes the conversion of ureidosuccinic acid (USA) to dihydroorotate, the third step of the de novo pyrimidine biosynthetic pathway. The protein is Dihydroorotase (URA4) of Saccharomyces cerevisiae (strain ATCC 204508 / S288c) (Baker's yeast).